Here is a 66-residue protein sequence, read N- to C-terminus: Small ribosomal subunit protein bS21 (66 aa).

This sequence belongs to the bacterial ribosomal protein bS21 family.

The chain is Small ribosomal subunit protein bS21 from Solidesulfovibrio magneticus (strain ATCC 700980 / DSM 13731 / RS-1) (Desulfovibrio magneticus).